Here is a 175-residue protein sequence, read N- to C-terminus: Bifunctional protein PyrR (175 aa).

Substrate contacts are provided by residues 40 to 41 (TR), 102 to 110 (DDVLYTGRT), Arg135, and Val159. The short motif at 98 to 110 (VIIIDDVLYTGRT) is the PRPP-binding element.

This sequence belongs to the purine/pyrimidine phosphoribosyltransferase family. PyrR subfamily. In terms of assembly, homodimer and homohexamer; in equilibrium.

The catalysed reaction is UMP + diphosphate = 5-phospho-alpha-D-ribose 1-diphosphate + uracil. Functionally, regulates transcriptional attenuation of the pyrimidine nucleotide (pyr) operon by binding in a uridine-dependent manner to specific sites on pyr mRNA. This disrupts an antiterminator hairpin in the RNA and favors formation of a downstream transcription terminator, leading to a reduced expression of downstream genes. Its function is as follows. Also displays a weak uracil phosphoribosyltransferase activity which is not physiologically significant. The sequence is that of Bifunctional protein PyrR from Staphylococcus aureus (strain MSSA476).